The sequence spans 690 residues: Glycine--tRNA ligase beta subunit (690 aa).

Belongs to the class-II aminoacyl-tRNA synthetase family. As to quaternary structure, tetramer of two alpha and two beta subunits.

The protein resides in the cytoplasm. The catalysed reaction is tRNA(Gly) + glycine + ATP = glycyl-tRNA(Gly) + AMP + diphosphate. The polypeptide is Glycine--tRNA ligase beta subunit (Pediococcus pentosaceus (strain ATCC 25745 / CCUG 21536 / LMG 10740 / 183-1w)).